The primary structure comprises 173 residues: Shikimate kinase 1 (173 aa).

14–19 (GAGKST) provides a ligand contact to ATP. Ser18 provides a ligand contact to Mg(2+). Asp36, Arg60, and Gly82 together coordinate substrate. Arg120 is an ATP binding site. Residue Arg140 coordinates substrate. Gln157 is a binding site for ATP.

This sequence belongs to the shikimate kinase family. Monomer. Requires Mg(2+) as cofactor.

It is found in the cytoplasm. It catalyses the reaction shikimate + ATP = 3-phosphoshikimate + ADP + H(+). It participates in metabolic intermediate biosynthesis; chorismate biosynthesis; chorismate from D-erythrose 4-phosphate and phosphoenolpyruvate: step 5/7. Catalyzes the specific phosphorylation of the 3-hydroxyl group of shikimic acid using ATP as a cosubstrate. The polypeptide is Shikimate kinase 1 (Sodalis glossinidius (strain morsitans)).